The following is an 89-amino-acid chain: MALDSAKKQEIISKFAEHEGDTGSPAVQIALLSERISYLTEHLKEHKKDHSSRLGLLKLVGQRKRLLNYLKRKDYEKYTQVIKELGIRG.

This sequence belongs to the universal ribosomal protein uS15 family. In terms of assembly, part of the 30S ribosomal subunit. Forms a bridge to the 50S subunit in the 70S ribosome, contacting the 23S rRNA.

In terms of biological role, one of the primary rRNA binding proteins, it binds directly to 16S rRNA where it helps nucleate assembly of the platform of the 30S subunit by binding and bridging several RNA helices of the 16S rRNA. Functionally, forms an intersubunit bridge (bridge B4) with the 23S rRNA of the 50S subunit in the ribosome. This Nitratiruptor sp. (strain SB155-2) protein is Small ribosomal subunit protein uS15.